The following is a 222-amino-acid chain: MGSPFILLNYKTYIQGTGKGAVDIAKACKTVSEESGIEIAVAPQLPDIYRVASEVELSVFSQHMDGIGAGSFTGHVFGKCIKEAGAFGTLINHSERRLTLAEIEASLKAAKEFGLRAIICTNNVPTTAAAAALVPDYVAIEPPELIGSGIPVSKADPEVVSGSVEAVSKINPDVKVLCGAGISKGEDLRAALDLGSQGVLLASGIVKASDPKAALEDLIRLV.

9-11 (NYK) lines the substrate pocket. Residue His93 is the Electrophile of the active site. Catalysis depends on Glu141, which acts as the Proton acceptor. Residues Ile146, Gly181, and 202–203 (AS) contribute to the substrate site.

It belongs to the triosephosphate isomerase family. As to quaternary structure, homotetramer; dimer of dimers.

Its subcellular location is the cytoplasm. It catalyses the reaction D-glyceraldehyde 3-phosphate = dihydroxyacetone phosphate. It functions in the pathway carbohydrate biosynthesis; gluconeogenesis. Its pathway is carbohydrate degradation; glycolysis; D-glyceraldehyde 3-phosphate from glycerone phosphate: step 1/1. Involved in the gluconeogenesis. Catalyzes stereospecifically the conversion of dihydroxyacetone phosphate (DHAP) to D-glyceraldehyde-3-phosphate (G3P). The polypeptide is Triosephosphate isomerase (Methanosarcina mazei (strain ATCC BAA-159 / DSM 3647 / Goe1 / Go1 / JCM 11833 / OCM 88) (Methanosarcina frisia)).